The chain runs to 262 residues: ATP synthase subunit a (262 aa).

5 helical membrane-spanning segments follow: residues 24–44 (AVHLDTLFFSLLAGVIFLFVF), 84–104 (VIAPLALTIFCWVFIMNAIDL), 129–149 (DISATLGMSICVFFLILFYTV), 194–214 (LFGNMYAGELIFILIAVMYMA), and 228–248 (LVWAIFHILVITLQAFIFMML).

Belongs to the ATPase A chain family. In terms of assembly, F-type ATPases have 2 components, CF(1) - the catalytic core - and CF(0) - the membrane proton channel. CF(1) has five subunits: alpha(3), beta(3), gamma(1), delta(1), epsilon(1). CF(0) has three main subunits: a(1), b(2) and c(9-12). The alpha and beta chains form an alternating ring which encloses part of the gamma chain. CF(1) is attached to CF(0) by a central stalk formed by the gamma and epsilon chains, while a peripheral stalk is formed by the delta and b chains.

Its subcellular location is the cell inner membrane. Functionally, key component of the proton channel; it plays a direct role in the translocation of protons across the membrane. The sequence is that of ATP synthase subunit a from Actinobacillus pleuropneumoniae serotype 3 (strain JL03).